A 103-amino-acid polypeptide reads, in one-letter code: Co-chaperonin GroES (103 aa).

Belongs to the GroES chaperonin family. As to quaternary structure, heptamer of 7 subunits arranged in a ring. Interacts with the chaperonin GroEL.

The protein resides in the cytoplasm. In terms of biological role, together with the chaperonin GroEL, plays an essential role in assisting protein folding. The GroEL-GroES system forms a nano-cage that allows encapsulation of the non-native substrate proteins and provides a physical environment optimized to promote and accelerate protein folding. GroES binds to the apical surface of the GroEL ring, thereby capping the opening of the GroEL channel. The polypeptide is Co-chaperonin GroES (Nostoc punctiforme (strain ATCC 29133 / PCC 73102)).